Reading from the N-terminus, the 388-residue chain is Putative F-box protein At3g49520 (388 aa).

One can recognise an F-box domain in the interval 1–47 (MTTISDLPYDLVKEIFSWVPFTSLRAVRSTCKTWNALSKNQIFGKKS).

The chain is Putative F-box protein At3g49520 from Arabidopsis thaliana (Mouse-ear cress).